The primary structure comprises 293 residues: 4-diphosphocytidyl-2-C-methyl-D-erythritol kinase (293 aa).

Lys-16 is an active-site residue. ATP is bound at residue 99–109; that stretch reads PMGAGLGGGSS. Asp-141 is an active-site residue.

This sequence belongs to the GHMP kinase family. IspE subfamily.

It carries out the reaction 4-CDP-2-C-methyl-D-erythritol + ATP = 4-CDP-2-C-methyl-D-erythritol 2-phosphate + ADP + H(+). Its pathway is isoprenoid biosynthesis; isopentenyl diphosphate biosynthesis via DXP pathway; isopentenyl diphosphate from 1-deoxy-D-xylulose 5-phosphate: step 3/6. Its function is as follows. Catalyzes the phosphorylation of the position 2 hydroxy group of 4-diphosphocytidyl-2C-methyl-D-erythritol. This chain is 4-diphosphocytidyl-2-C-methyl-D-erythritol kinase, found in Burkholderia cenocepacia (strain HI2424).